Reading from the N-terminus, the 548-residue chain is (S)-beta-macrocarpene synthase (548 aa).

Residues Asp302 and Asp306 each contribute to the Mg(2+) site. Positions 302, 306, 443, and 446 each coordinate substrate. A DDXXD motif motif is present at residues 302–306; sequence DDTLD. Residues Asn446, Ser450, and Glu454 each coordinate Mg(2+).

This sequence belongs to the terpene synthase family. As to quaternary structure, monomer. The cofactor is Mg(2+). Mn(2+) is required as a cofactor. In terms of tissue distribution, expressed in roots. Not detected in leaves, unless damaged by herbivory or infected by fungi.

It is found in the cytoplasm. The enzyme catalyses (S)-beta-bisabolene = (S)-beta-macrocarpene. It catalyses the reaction (2E,6E)-farnesyl diphosphate = (S)-beta-bisabolene + diphosphate. It carries out the reaction (2E)-geranyl diphosphate = (4S)-limonene + diphosphate. The catalysed reaction is (2E)-geranyl diphosphate = beta-myrcene + diphosphate. The enzyme catalyses (2E)-geranyl diphosphate = terpinolene + diphosphate. It catalyses the reaction (2E)-geranyl diphosphate + H2O = (S)-linalool + diphosphate. It participates in secondary metabolite biosynthesis; terpenoid biosynthesis. Functionally, involved in the biosynthesis of the bicyclic sesquiterpene (S)-beta-macrocarpene. Can use both geranyl diphosphate and farnesyl diphosphate as substrate, but not geranylgeranyl diphosphate. Produces mainly (S)-beta-macrocarpene, but also smaller amounts of beta-bisabolene and (E)-beta-farnesene when used with farnesyl diphosphate as substrate. In the presence of geranyl diphosphate, produces the acyclic monoterpenes beta-myrcene and linalool along with minor amounts of the cyclic compounds limonene, alpha-thujene, sabinene and alpha-terpinolene. May be involved in plant defense. This Zea mays (Maize) protein is (S)-beta-macrocarpene synthase.